The sequence spans 249 residues: 5'-nucleotidase SurE (249 aa).

4 residues coordinate a divalent metal cation: aspartate 9, aspartate 10, serine 40, and asparagine 92.

Belongs to the SurE nucleotidase family. A divalent metal cation is required as a cofactor.

It is found in the cytoplasm. The enzyme catalyses a ribonucleoside 5'-phosphate + H2O = a ribonucleoside + phosphate. In terms of biological role, nucleotidase that shows phosphatase activity on nucleoside 5'-monophosphates. The sequence is that of 5'-nucleotidase SurE from Shewanella sediminis (strain HAW-EB3).